We begin with the raw amino-acid sequence, 148 residues long: Ribosome maturation factor RimP (148 aa).

It belongs to the RimP family.

The protein localises to the cytoplasm. In terms of biological role, required for maturation of 30S ribosomal subunits. The sequence is that of Ribosome maturation factor RimP from Thermosipho africanus (strain TCF52B).